Here is a 763-residue protein sequence, read N- to C-terminus: Phosphoglycerol transferase I (763 aa).

4 helical membrane passes run 1–21 (MSEL…AWKA), 26–46 (WWFA…ITLY), 77–97 (ILPG…LGWI), and 108–128 (FGYS…SPAF).

It belongs to the OpgB family.

It localises to the cell inner membrane. The catalysed reaction is a phosphatidylglycerol + a membrane-derived-oligosaccharide D-glucose = a 1,2-diacyl-sn-glycerol + a membrane-derived-oligosaccharide 6-(glycerophospho)-D-glucose.. The protein operates within glycan metabolism; osmoregulated periplasmic glucan (OPG) biosynthesis. Functionally, transfers a phosphoglycerol residue from phosphatidylglycerol to the membrane-bound nascent glucan backbones. This is Phosphoglycerol transferase I from Escherichia fergusonii (strain ATCC 35469 / DSM 13698 / CCUG 18766 / IAM 14443 / JCM 21226 / LMG 7866 / NBRC 102419 / NCTC 12128 / CDC 0568-73).